The chain runs to 367 residues: MTKTIVVKIGTSSLTQAETGQLALSTIATLAETLCHLRSQGHRVILVSSGAVGVGCARLGLTERPRAIALKQAVAAVGQGRLIRIYDDLFTTLQQAIAQVLLTRSDLVQRSRYLNAYNTFQELLGLGVIPIVNENDTVAIDELKFGDNDTLSALVASLIEADWLFLLTDVDRLYSADPRSVPDARPIALVSSIKELAELQIGSQGSQWGTGGMVTKISAARIAIAAGVRTVITQGRFPQNIEKIIQGELIGTHFEPQPEPTSARKRWIAYGLLPAGKLYLDEGAIAAISLAGKSLLAAGIKLVEGEFDTQDAVQLCDSNGNEIARGLVNYNSNDLQKIRGCHSREISTILGYAGAETVIHRDNLVLI.

Lysine 8 contacts ATP. 3 residues coordinate substrate: serine 49, aspartate 136, and asparagine 148. ATP is bound by residues 168 to 169 (TD) and 210 to 216 (TGGMVTK). The PUA domain occupies 275–353 (AGKLYLDEGA…REISTILGYA (79 aa)).

The protein belongs to the glutamate 5-kinase family.

Its subcellular location is the cytoplasm. The enzyme catalyses L-glutamate + ATP = L-glutamyl 5-phosphate + ADP. Its pathway is amino-acid biosynthesis; L-proline biosynthesis; L-glutamate 5-semialdehyde from L-glutamate: step 1/2. Catalyzes the transfer of a phosphate group to glutamate to form L-glutamate 5-phosphate. This Nostoc punctiforme (strain ATCC 29133 / PCC 73102) protein is Glutamate 5-kinase.